We begin with the raw amino-acid sequence, 156 residues long: Small ribosomal subunit protein uS7 (156 aa).

It belongs to the universal ribosomal protein uS7 family. As to quaternary structure, part of the 30S ribosomal subunit. Contacts proteins S9 and S11.

In terms of biological role, one of the primary rRNA binding proteins, it binds directly to 16S rRNA where it nucleates assembly of the head domain of the 30S subunit. Is located at the subunit interface close to the decoding center, probably blocks exit of the E-site tRNA. The polypeptide is Small ribosomal subunit protein uS7 (Trichormus variabilis (strain ATCC 29413 / PCC 7937) (Anabaena variabilis)).